The chain runs to 193 residues: FMN-dependent NADH:quinone oxidoreductase 1 (193 aa).

Residues serine 9, 15 to 17, and 85 to 88 contribute to the FMN site; these read SIS and MYNF.

This sequence belongs to the azoreductase type 1 family. In terms of assembly, homodimer. It depends on FMN as a cofactor.

It carries out the reaction 2 a quinone + NADH + H(+) = 2 a 1,4-benzosemiquinone + NAD(+). The enzyme catalyses N,N-dimethyl-1,4-phenylenediamine + anthranilate + 2 NAD(+) = 2-(4-dimethylaminophenyl)diazenylbenzoate + 2 NADH + 2 H(+). In terms of biological role, quinone reductase that provides resistance to thiol-specific stress caused by electrophilic quinones. Functionally, also exhibits azoreductase activity. Catalyzes the reductive cleavage of the azo bond in aromatic azo compounds to the corresponding amines. In Xanthomonas axonopodis pv. citri (strain 306), this protein is FMN-dependent NADH:quinone oxidoreductase 1.